Consider the following 182-residue polypeptide: UPF0690 protein C1orf52 homolog (182 aa).

Residues 1-61 (MAAEEKDPLS…AEKRLPGPDE (61 aa)) form a disordered region. The span at 23 to 32 (SDEEDNSEPE) shows a compositional bias: acidic residues. Positions 51 to 61 (KAEKRLPGPDE) are enriched in basic and acidic residues. Thr-67 bears the Phosphothreonine mark. Tyr-132 is modified (phosphotyrosine). The segment at 132–182 (YEDNGDDAPQNAKKARLLPEGEETVESDDEKDEHTSKKRKIELGEPTKKKK) is disordered. A compositionally biased stretch (acidic residues) spans 151 to 162 (EGEETVESDDEK). Ser-158 is modified (phosphoserine). The segment covering 172-182 (IELGEPTKKKK) has biased composition (basic and acidic residues).

The protein belongs to the UPF0690 family.

The protein is UPF0690 protein C1orf52 homolog of Bos taurus (Bovine).